Consider the following 586-residue polypeptide: MSATVVDAVNAAPLSGSKEMSLEEPKKMTREDWRKKKELEEQRKLGNAPAEVDEEGKDINPHIPQYISSVPWYIDPSKRPTLKHQRPQPEKQKQFSSSGEWYKRGVKENSIITKYRKGACENCGAMTHKKKDCFERPRRVGAKFTGTNIAPDEHVQPQLMFDYDGKRDRWNGYNPEEHMKIVEEYAKVDLAKRTLKAQKLQEELASGKLVEQANSPKHQWGEEEPNSQMEKDHNSEDEDEDKYADDIDMPGQNFDSKRRITVRNLRIREDIAKYLRNLDPNSAYYDPKTRAMRENPYANAGKNPDEVSYAGDNFVRYTGDTISMAQTQLFAWEAYDKGSEVHLQADPTKLELLYKSFKVKKEDFKEQQKESILEKYGGQEHLDAPPAELLLAQTEDYVEYSRHGTVIKGQERAVACSKYEEDVKIHNHTHIWGSYWKEGRWGYKCCHSFFKYSYCTGEAGKEIVNSEECIINEITGEESVKKPQTLMELHQEKLKEEKKKKKKKKKKHRKSSSDSDDEEKKHEKLKKALNAEEARLLHVKETMQIDERKRPYNSMYETREPTEEEMEAYRMKRQRPDDPMASFLGQ.

2 disordered regions span residues 1–63 (MSAT…NPHI) and 77–100 (SKRP…SSGE). Position 2 is an N-acetylserine (S2). Residues 20–44 (MSLEEPKKMTREDWRKKKELEEQRK) show a composition bias toward basic and acidic residues. A CCHC-type zinc finger spans residues 118 to 135 (GACENCGAMTHKKKDCFE). The Bipartite nuclear localization signal motif lies at 129–169 (KKKDCFERPRRVGAKFTGTNIAPDEHVQPQLMFDYDGKRDR). The disordered stretch occupies residues 206–254 (SGKLVEQANSPKHQWGEEEPNSQMEKDHNSEDEDEDKYADDIDMPGQNF). A phosphoserine mark is found at S215, S227, and S235. The span at 235-248 (SEDEDEDKYADDID) shows a compositional bias: acidic residues. Glycyl lysine isopeptide (Lys-Gly) (interchain with G-Cter in SUMO2) cross-links involve residues K349 and K408. Positions 496 to 586 (EEKKKKKKKK…DDPMASFLGQ (91 aa)) are disordered. Basic residues predominate over residues 498–510 (KKKKKKKKKKHRK). Composition is skewed to basic and acidic residues over residues 529-550 (LNAE…ERKR) and 557-578 (ETRE…RPDD).

It belongs to the SLU7 family. As to quaternary structure, component of pre-catalytic, catalytic and post-catalytic spliceosomes. Associates with the spliceosome prior to recognition of the 3'-splice site for step II, probably during catalysis of step I.

Its subcellular location is the nucleus. The protein resides in the nucleus speckle. The protein localises to the cytoplasm. In terms of biological role, required for pre-mRNA splicing as component of the spliceosome. Participates in the second catalytic step of pre-mRNA splicing, when the free hydroxyl group of exon I attacks the 3'-splice site to generate spliced mRNA and the excised lariat intron. Required for holding exon 1 properly in the spliceosome and for correct AG identification when more than one possible AG exists in 3'-splicing site region. May be involved in the activation of proximal AG. Probably also involved in alternative splicing regulation. The sequence is that of Pre-mRNA-splicing factor SLU7 (SLU7) from Homo sapiens (Human).